Reading from the N-terminus, the 132-residue chain is Ribosome-binding factor A (132 aa).

It belongs to the RbfA family. In terms of assembly, monomer. Binds 30S ribosomal subunits, but not 50S ribosomal subunits or 70S ribosomes.

The protein resides in the cytoplasm. Functionally, one of several proteins that assist in the late maturation steps of the functional core of the 30S ribosomal subunit. Associates with free 30S ribosomal subunits (but not with 30S subunits that are part of 70S ribosomes or polysomes). Required for efficient processing of 16S rRNA. May interact with the 5'-terminal helix region of 16S rRNA. This is Ribosome-binding factor A from Prochlorococcus marinus subsp. pastoris (strain CCMP1986 / NIES-2087 / MED4).